The chain runs to 476 residues: ATP synthase subunit beta (476 aa).

ATP is bound at residue 154-161 (GGAGVGKT).

It belongs to the ATPase alpha/beta chains family. F-type ATPases have 2 components, CF(1) - the catalytic core - and CF(0) - the membrane proton channel. CF(1) has five subunits: alpha(3), beta(3), gamma(1), delta(1), epsilon(1). CF(0) has four main subunits: a(1), b(1), b'(1) and c(9-12).

The protein resides in the cell inner membrane. It carries out the reaction ATP + H2O + 4 H(+)(in) = ADP + phosphate + 5 H(+)(out). In terms of biological role, produces ATP from ADP in the presence of a proton gradient across the membrane. The catalytic sites are hosted primarily by the beta subunits. This is ATP synthase subunit beta from Rhodopseudomonas palustris (strain HaA2).